The sequence spans 179 residues: Large ribosomal subunit protein uL5 (179 aa).

The protein belongs to the universal ribosomal protein uL5 family. Part of the 50S ribosomal subunit; part of the 5S rRNA/L5/L18/L25 subcomplex. Contacts the 5S rRNA and the P site tRNA. Forms a bridge to the 30S subunit in the 70S ribosome.

Functionally, this is one of the proteins that bind and probably mediate the attachment of the 5S RNA into the large ribosomal subunit, where it forms part of the central protuberance. In the 70S ribosome it contacts protein S13 of the 30S subunit (bridge B1b), connecting the 2 subunits; this bridge is implicated in subunit movement. Contacts the P site tRNA; the 5S rRNA and some of its associated proteins might help stabilize positioning of ribosome-bound tRNAs. The polypeptide is Large ribosomal subunit protein uL5 (Staphylococcus epidermidis (strain ATCC 35984 / DSM 28319 / BCRC 17069 / CCUG 31568 / BM 3577 / RP62A)).